Here is a 653-residue protein sequence, read N- to C-terminus: Bifunctional lysine-specific demethylase and histidyl-hydroxylase NO66 (653 aa).

The span at Met-1–Ser-12 shows a compositional bias: low complexity. 2 disordered regions span residues Met-1–Ala-50 and Phe-65–Thr-137. Residues Gln-13–Thr-26 show a composition bias toward polar residues. Ser-44 bears the Phosphoserine mark. Low complexity predominate over residues Ser-72–Lys-86. Ser-131 is subject to Phosphoserine. Thr-137 is subject to Phosphothreonine. At Ser-138 the chain carries Phosphoserine. The interval Ala-184–Asp-208 is disordered. Residues Asn-194–Asp-208 show a composition bias toward basic and acidic residues. The JmjC domain maps to Phe-300–Val-450. Residues His-351, Asp-353, and His-416 each coordinate Fe cation.

Belongs to the ROX family. NO66 subfamily. Requires Fe(2+) as cofactor.

It is found in the nucleus. The catalysed reaction is N(6),N(6)-dimethyl-L-lysyl(36)-[histone H3] + 2 2-oxoglutarate + 2 O2 = L-lysyl(36)-[histone H3] + 2 formaldehyde + 2 succinate + 2 CO2. Oxygenase that can act as both a histone lysine demethylase and a ribosomal histidine hydroxylase. Specifically demethylates 'Lys-4' (H3K4me) and 'Lys-36' (H3K36me) of histone H3, thereby playing a central role in histone code. The protein is Bifunctional lysine-specific demethylase and histidyl-hydroxylase NO66 of Drosophila melanogaster (Fruit fly).